A 423-amino-acid chain; its full sequence is Hydroxymethylglutaryl-CoA synthase-like protein AKT4-1 (423 aa).

Belongs to the thiolase-like superfamily. HMG-CoA synthase family.

Its pathway is mycotoxin biosynthesis. Hydroxymethylglutaryl-CoA synthase-like protein; part of the gene clusters that mediate the biosynthesis of the host-selective toxins (HSTs) AK-toxins responsible for Japanese pear black spot disease by the Japanese pear pathotype. AK-toxins are esters of 9,10-epoxy 8-hydroxy 9-methyldecatrienoic acid (EDA). On cellular level, AK-toxins affect plasma membrane of susceptible cells and cause a sudden increase in loss of K(+) after a few minutes of toxin treatment. The acyl-CoA ligase AKT1, the hydrolase AKT2 and enoyl-CoA hydratase AKT3 are all involved in the biosynthesis of the AK-, AF- and ACT-toxin common 9,10-epoxy-8-hydroxy-9-methyl-decatrienoic acid (EDA) structural moiety. Part of the EDA biosynthesis occurs in the peroxisome since these 3 enzymes are localized in peroxisomes. The exact roles of the 3 enzymes, as well as of additional AK-toxin clusters enzymes, including AKT4, AKT6 and AKTS1, have still to be elucidated. The Cytochrome P450 monooxygenase AKT7 on the other side functions to limit production of EDA and AK-toxin, probably via the catalysis of a side reaction of EDA or its precursor. This chain is Hydroxymethylglutaryl-CoA synthase-like protein AKT4-1, found in Alternaria alternata (Alternaria rot fungus).